A 1041-amino-acid chain; its full sequence is Protein EGT2 (1041 aa).

A signal peptide spans 1–20 (MNKLLLHLVRVISILGLANA). N-linked (GlcNAc...) asparagine glycans are attached at residues Asn65, Asn103, Asn161, Asn175, Asn249, Asn332, Asn401, Asn435, Asn465, Asn485, Asn506, Asn526, Asn544, and Asn556. Residues 388–410 (SSSSISLSAPSSSNSTFTTPSSS) form a disordered region. Repeat 1 spans residues 457–492 (SSTLSYTSNVTISVSSATQHTTTPSYVSNSTTLSSS). A 9 X approximate repeats region spans residues 457–962 (SSTLSYTSNV…TLKTSTFQKA (506 aa)). 2 repeat units span residues 577–606 (TVAS…ISTI) and 613–647 (SGTD…INTN). Residues Asn635, Asn636, Asn657, and Asn709 are each glycosylated (N-linked (GlcNAc...) asparagine). Repeat 4 spans residues 716–745 (TDKSDTYSVISSTESAQVTEYDSLLPISTL). Asn756 carries N-linked (GlcNAc...) asparagine glycosylation. Repeat copies occupy residues 773–802 (TDKG…ISTL), 811–840 (TDES…ISTL), 849–886 (TGES…TSLS), 887–924 (TEES…TSLS), and 925–962 (TEES…FQKA). The GPI-anchor amidated glycine moiety is linked to residue Gly1020. Residues 1021–1041 (AAGQLTIRIGSLLLGLISFLL) constitute a propeptide, removed in mature form.

Post-translationally, the GPI-anchor is attached to the protein in the endoplasmic reticulum and serves to target the protein to the cell surface. There, the glucosamine-inositol phospholipid moiety is cleaved off and the GPI-modified mannoprotein is covalently attached via its lipidless GPI glycan remnant to the 1,6-beta-glucan of the outer cell wall layer.

The protein resides in the secreted. Its subcellular location is the cell wall. It localises to the membrane. Its function is as follows. Seems to be involved in the correct timing of cell separation after cytokinesis, as separation of mutant daughter cells is delayed. Could either be an enzyme necessary for glucans-degradation of the cell wall at the neck region between mother and daughter cells or a regulatory protein controlling this metabolic step. This is Protein EGT2 (EGT2) from Saccharomyces cerevisiae (strain ATCC 204508 / S288c) (Baker's yeast).